Consider the following 75-residue polypeptide: Tautomerase PptA (75 aa).

The active-site Proton acceptor; via imino nitrogen is Pro-2.

This sequence belongs to the 4-oxalocrotonate tautomerase family. PptA subfamily. Homodimer.

It localises to the cytoplasm. This is Tautomerase PptA from Escherichia coli O127:H6 (strain E2348/69 / EPEC).